Reading from the N-terminus, the 430-residue chain is Tyrosine--tRNA ligase (430 aa).

Y32 serves as a coordination point for L-tyrosine. Residues P37 to H46 carry the 'HIGH' region motif. Y172 and Q176 together coordinate L-tyrosine. Residues K232 to T236 carry the 'KMSKS' region motif. K235 is an ATP binding site. Positions I362–E430 constitute an S4 RNA-binding domain.

It belongs to the class-I aminoacyl-tRNA synthetase family. TyrS type 1 subfamily. In terms of assembly, homodimer.

Its subcellular location is the cytoplasm. It catalyses the reaction tRNA(Tyr) + L-tyrosine + ATP = L-tyrosyl-tRNA(Tyr) + AMP + diphosphate + H(+). Catalyzes the attachment of tyrosine to tRNA(Tyr) in a two-step reaction: tyrosine is first activated by ATP to form Tyr-AMP and then transferred to the acceptor end of tRNA(Tyr). The polypeptide is Tyrosine--tRNA ligase (Porphyromonas gingivalis (strain ATCC 33277 / DSM 20709 / CIP 103683 / JCM 12257 / NCTC 11834 / 2561)).